The primary structure comprises 89 residues: Small ribosomal subunit protein uS15 (89 aa).

Belongs to the universal ribosomal protein uS15 family. As to quaternary structure, part of the 30S ribosomal subunit. Forms a bridge to the 50S subunit in the 70S ribosome, contacting the 23S rRNA.

Functionally, one of the primary rRNA binding proteins, it binds directly to 16S rRNA where it helps nucleate assembly of the platform of the 30S subunit by binding and bridging several RNA helices of the 16S rRNA. Its function is as follows. Forms an intersubunit bridge (bridge B4) with the 23S rRNA of the 50S subunit in the ribosome. The sequence is that of Small ribosomal subunit protein uS15 from Chlorobium phaeovibrioides (strain DSM 265 / 1930) (Prosthecochloris vibrioformis (strain DSM 265)).